The sequence spans 312 residues: 2,3-dihydroxyphenylpropionate/2,3-dihydroxicinnamic acid 1,2-dioxygenase (312 aa).

His115 acts as the Proton donor in catalysis. His179 (proton acceptor) is an active-site residue.

This sequence belongs to the LigB/MhpB extradiol dioxygenase family. Homotetramer. Fe(2+) serves as cofactor.

It catalyses the reaction 3-(2,3-dihydroxyphenyl)propanoate + O2 = (2Z,4E)-2-hydroxy-6-oxonona-2,4-dienedioate + H(+). The catalysed reaction is (2E)-3-(2,3-dihydroxyphenyl)prop-2-enoate + O2 = (2Z,4E,7E)-2-hydroxy-6-oxonona-2,4,7-trienedioate + H(+). Its pathway is aromatic compound metabolism; 3-phenylpropanoate degradation. Catalyzes the non-heme iron(II)-dependent oxidative cleavage of 2,3-dihydroxyphenylpropionic acid and 2,3-dihydroxicinnamic acid into 2-hydroxy-6-ketononadienedioate and 2-hydroxy-6-ketononatrienedioate, respectively. The chain is 2,3-dihydroxyphenylpropionate/2,3-dihydroxicinnamic acid 1,2-dioxygenase from Mycolicibacterium paratuberculosis (strain ATCC BAA-968 / K-10) (Mycobacterium paratuberculosis).